Here is a 471-residue protein sequence, read N- to C-terminus: Glutamate--tRNA ligase 1 (471 aa).

A 'HIGH' region motif is present at residues 10–20 (PSPTGFLHIGG). The disordered stretch occupies residues 113 to 140 (ARKEGRPPRYDGRWRDRDPSEAPKDRDP). The 'KMSKS' region signature appears at 239–243 (KLSKR). ATP is bound at residue Lys-242.

Belongs to the class-I aminoacyl-tRNA synthetase family. Glutamate--tRNA ligase type 1 subfamily. Monomer.

The protein localises to the cytoplasm. The enzyme catalyses tRNA(Glu) + L-glutamate + ATP = L-glutamyl-tRNA(Glu) + AMP + diphosphate. Catalyzes the attachment of glutamate to tRNA(Glu) in a two-step reaction: glutamate is first activated by ATP to form Glu-AMP and then transferred to the acceptor end of tRNA(Glu). This is Glutamate--tRNA ligase 1 from Xanthobacter autotrophicus (strain ATCC BAA-1158 / Py2).